Consider the following 152-residue polypeptide: Xanthine-guanine phosphoribosyltransferase (152 aa).

Residues 37–38 (RG), arginine 69, and 88–96 (DDLVDTGVT) each bind 5-phospho-alpha-D-ribose 1-diphosphate. Arginine 69 is a GMP binding site. Aspartate 89 contacts Mg(2+). Guanine is bound by residues aspartate 92 and isoleucine 135. Residues aspartate 92 and isoleucine 135 each contribute to the xanthine site. Residues 92–96 (DTGVT) and 134–135 (WI) each bind GMP.

The protein belongs to the purine/pyrimidine phosphoribosyltransferase family. XGPT subfamily. Homotetramer. Requires Mg(2+) as cofactor.

The protein resides in the cell inner membrane. The enzyme catalyses GMP + diphosphate = guanine + 5-phospho-alpha-D-ribose 1-diphosphate. The catalysed reaction is XMP + diphosphate = xanthine + 5-phospho-alpha-D-ribose 1-diphosphate. It carries out the reaction IMP + diphosphate = hypoxanthine + 5-phospho-alpha-D-ribose 1-diphosphate. Its pathway is purine metabolism; GMP biosynthesis via salvage pathway; GMP from guanine: step 1/1. It participates in purine metabolism; XMP biosynthesis via salvage pathway; XMP from xanthine: step 1/1. Functionally, purine salvage pathway enzyme that catalyzes the transfer of the ribosyl-5-phosphate group from 5-phospho-alpha-D-ribose 1-diphosphate (PRPP) to the N9 position of the 6-oxopurines guanine and xanthine to form the corresponding ribonucleotides GMP (guanosine 5'-monophosphate) and XMP (xanthosine 5'-monophosphate), with the release of PPi. To a lesser extent, also acts on hypoxanthine. The protein is Xanthine-guanine phosphoribosyltransferase of Sodalis glossinidius (strain morsitans).